A 660-amino-acid chain; its full sequence is MLPKSVTQGLVLALLVGTVAVARPRNLLSLLALGQGALDRLELDGLLNTLVARVHCTDGPCEKCLSVENVLALGKPDKPQPAPESVLESRHIIYLSAAAALYLNNPEKTCKDIQAGLLASHVDDYLATLESPEAMTLGLSQLLQKIEAHAASQPTGEKTCVDLPQLLEEAEAAGVSKSAGLVLTALLDHVINGSCFQGLPSPQYFVDFVFRLHSSDPPNITLHELENLMHHLGVGGEDHSDHDDHGDHADHSHPDRKASHQDSELHTPHNSNSSVWDTLCLSAKDIMAVYGLSEEAGVSPQAWAQLTPALVQQQLSGACSPYPTIRIQDQLSQTERYLYGSLATLLICLCAVFGLLLLTCAKCSTATHYIMQTFLSLAVGALTGDALLHLIPKVLGLHTHGGEGHTHEEEVGVGGQATWRLLAVLGGFYIFFLFESFFNLLLPRDQDSEKDGPCSHGGHSHGISLQLAPSNLRQSKQTHESSRSDLVAEETPELLNPETRRLRAELRLLPYLITLGDAVHNFADGLAVGAAFSSSWKTGLATSLAVFCHELPHELGDFAALLHAGLSVKRALLLNLASALTAFAGLYVALAVGVGEEGEAWILAVATGLFLYVALCDMLPAMMNVRDQRPWLLFLLHNVGLLGGWTVLLLLSLYEDNITF.

Positions 1–22 (MLPKSVTQGLVLALLVGTVAVA) are cleaved as a signal peptide. Residues 23 to 337 (RPRNLLSLLA…QDQLSQTERY (315 aa)) are Extracellular-facing. Disulfide bonds link Cys56-Cys61, Cys64-Cys110, and Cys160-Cys195. Asn192 and Asn219 each carry an N-linked (GlcNAc...) asparagine glycan. A disordered region spans residues 233 to 273 (GVGGEDHSDHDDHGDHADHSHPDRKASHQDSELHTPHNSNS). Residues 236-267 (GEDHSDHDDHGDHADHSHPDRKASHQDSELHT) are compositionally biased toward basic and acidic residues. N-linked (GlcNAc...) asparagine glycosylation is present at Asn272. Cysteines 280 and 319 form a disulfide. Residues 338–358 (LYGSLATLLICLCAVFGLLLL) traverse the membrane as a helical segment. Residues 359–376 (TCAKCSTATHYIMQTFLS) are Cytoplasmic-facing. Residues 377–397 (LAVGALTGDALLHLIPKVLGL) form a helical membrane-spanning segment. At 398–420 (HTHGGEGHTHEEEVGVGGQATWR) the chain is on the extracellular side. The chain crosses the membrane as a helical span at residues 421-441 (LLAVLGGFYIFFLFESFFNLL). Residues 442 to 511 (LPRDQDSEKD…LRAELRLLPY (70 aa)) lie on the Cytoplasmic side of the membrane. An Essential for SLC39A4 endocytosis motif is present at residues 465–467 (LQL). A helical membrane pass occupies residues 512–531 (LITLGDAVHNFADGLAVGAA). The Zn(2+) site is built by His520, Asn521, and Asp524. The Extracellular segment spans residues 532-539 (FSSSWKTG). Residues 540-566 (LATSLAVFCHELPHELGDFAALLHAGL) traverse the membrane as a helical segment. Zn(2+) is bound by residues His549, Glu550, and His553. At 567 to 571 (SVKRA) the chain is on the cytoplasmic side. Residues 572–592 (LLLNLASALTAFAGLYVALAV) form a helical membrane-spanning segment. The Extracellular segment spans residues 593-599 (GVGEEGE). The helical transmembrane segment at 600 to 620 (AWILAVATGLFLYVALCDMLP) threads the bilayer. The Cytoplasmic portion of the chain corresponds to 621 to 630 (AMMNVRDQRP). The helical transmembrane segment at 631–651 (WLLFLLHNVGLLGGWTVLLLL) threads the bilayer. Over 652 to 660 (SLYEDNITF) the chain is Extracellular. Asn657 carries N-linked (GlcNAc...) asparagine glycosylation.

This sequence belongs to the ZIP transporter (TC 2.A.5) family. In terms of assembly, homodimer. Homodimerization is mediated by the transmembrane domain. In terms of processing, the extracellular N-terminal ectodomain is cleaved when cells are Zn(2+) deficient, N-terminally cleaved SLC39A4 is then internalized faster. Under excess Zn(2+) conditions, SLC39A4 on the cell surface is rapidly endocytosed, ubiquitinated, and degraded. Post-translationally, N-glycosylated. Highly expressed in the small intestine and embryonic visceral yolk sac. Weakly expressed in the stomach and liver.

It is found in the cell membrane. The protein resides in the recycling endosome membrane. Its subcellular location is the apical cell membrane. The catalysed reaction is Zn(2+)(in) = Zn(2+)(out). Selective transporter that mediates the uptake of Zn(2+). Plays an essential role for dietary zinc uptake from small intestine. The Zn(2+) uniporter activity is regulated by zinc availability. Also exhibits polyspecific binding and transport of Cu(2+), Cd(2+) and possibly Ni(2+) but at higher concentrations. In Mus musculus (Mouse), this protein is Zinc transporter ZIP4 (Slc39a4).